We begin with the raw amino-acid sequence, 359 residues long: Peptide chain release factor 1 (359 aa).

Position 235 is an N5-methylglutamine (glutamine 235). The disordered stretch occupies residues lysine 284–phenylalanine 311.

The protein belongs to the prokaryotic/mitochondrial release factor family. Methylated by PrmC. Methylation increases the termination efficiency of RF1.

Its subcellular location is the cytoplasm. Functionally, peptide chain release factor 1 directs the termination of translation in response to the peptide chain termination codons UAG and UAA. The sequence is that of Peptide chain release factor 1 from Bartonella quintana (strain Toulouse) (Rochalimaea quintana).